Reading from the N-terminus, the 360-residue chain is Flavin-dependent trigonelline monooxygenase, oxygenase component (360 aa).

It belongs to the bacterial luciferase oxidoreductase family. In terms of assembly, homodimer. The trigonelline monooxygenase is composed of a reductase component TgnA and an oxygenase component TgnB.

The enzyme catalyses N-methylnicotinate + FMNH2 + O2 = (Z)-2-((N-methylformamido)methylene)-5-hydroxybutanolactone + FMN + H(+). It carries out the reaction N-methylnicotinate + FADH2 + O2 = (Z)-2-((N-methylformamido)methylene)-5-hydroxybutanolactone + FAD + H(+). In terms of biological role, involved in the degradation of the pyridine ring of trigonelline (TG; N-methylnicotinate) into succinate and methylamine as carbon and nitrogen sources, respectively. Catalyzes the insertion of two oxygens, followed by a ring cleavage of trigonelline to yield (Z)-2-((N-methylformamido)methylene)-5-hydroxybutyrolactone (MFMB). It is able to use reduced FMN or FAD. The sequence is that of Flavin-dependent trigonelline monooxygenase, oxygenase component from Acinetobacter baylyi (strain ATCC 33305 / BD413 / ADP1).